The primary structure comprises 830 residues: Frameshifted structural polyprotein (830 aa).

The disordered stretch occupies residues 58–109; sequence AIAPARPPKPKKKKTTKPKPKTQPKKINGKTQQQKKKDKQADKKKKKPGKRE. Basic residues predominate over residues 65-107; the sequence is PKPKKKKTTKPKPKTQPKKINGKTQQQKKKDKQADKKKKKPGK. Residues 94–106 form a ribosome-binding region; sequence KDKQADKKKKKPG. Cys119 and Cys134 are disulfide-bonded. In terms of domain architecture, Peptidase S3 spans 119–267; the sequence is CIFEVKHEGK…RVTPEGSEEW (149 aa). Active-site charge relay system residues include His145, Asp167, and Ser219. N-linked (GlcNAc...) asparagine; by host glycosylation is found at Asn280, Asn327, Asn533, and Asn595. Residues 702–722 form a helical membrane-spanning segment; the sequence is AVVGMSLLALISIFASCYMLV. S-palmitoyl cysteine; by host attachment occurs at residues Cys718, Cys728, Cys748, and Cys749. The transient transmembrane before p62-6K protein processing stretch occupies residues 728-748; that stretch reads CLTPYALTPGAAVPWTLGILC. 2 helical membrane-spanning segments follow: residues 771–791 and 793–813; these read ALFWLEFAAPVACILIITYCL and NVLCCCKSLSFLSATEPRGHR.

In terms of assembly, homodimer. Homomultimer. Interacts with host karyopherin KPNA4; this interaction allows the nuclear import of the viral capsid protein. Precursor of protein E3/E2: The precursor of protein E3/E2 and E1 form a heterodimer shortly after synthesis. Interacts with host IRAK1; the interaction leads to inhibition of IRAK1-dependent signaling. Processing of the precursor of protein E3/E2 into E2 and E3 results in a heterodimer of the spike glycoproteins E2 and E1. Spike at virion surface are constituted of three E2-E1 heterodimers. Interacts with 6K protein. Interacts with host MXRA8; this interaction mediates virus entry. Post-translationally, specific enzymatic cleavages in vivo yield mature proteins. Capsid protein is auto-cleaved during polyprotein translation, unmasking a signal peptide at the N-terminus of the precursor of E3/E2. The remaining polyprotein is then targeted to the host endoplasmic reticulum, where host signal peptidase cleaves it into pE2 and TF. pE2 is further processed to mature E3 and E2 by host furin in trans-Golgi vesicle.

Its subcellular location is the virion. It localises to the host cytoplasm. It is found in the host cell membrane. The protein resides in the host nucleus. The protein localises to the virion membrane. It carries out the reaction Autocatalytic release of the core protein from the N-terminus of the togavirus structural polyprotein by hydrolysis of a -Trp-|-Ser- bond.. Functionally, forms an icosahedral capsid with a T=4 symmetry composed of 240 copies of the capsid protein surrounded by a lipid membrane through which penetrate 80 spikes composed of trimers of E1-E2 heterodimers. The capsid protein binds to the viral RNA genome at a site adjacent to a ribosome binding site for viral genome translation following genome release. Possesses a protease activity that results in its autocatalytic cleavage from the nascent structural protein. Following its self-cleavage, the capsid protein transiently associates with ribosomes, and within several minutes the protein binds to viral RNA and rapidly assembles into icosahedric core particles. The resulting nucleocapsid eventually associates with the cytoplasmic domain of the spike glycoprotein E2 at the cell membrane, leading to budding and formation of mature virions. In case of infection, new virions attach to target cells and after clathrin-mediated endocytosis their membrane fuses with the host endosomal membrane. This leads to the release of the nucleocapsid into the cytoplasm, followed by an uncoating event necessary for the genomic RNA to become accessible. The uncoating might be triggered by the interaction of capsid proteins with ribosomes. Binding of ribosomes would release the genomic RNA since the same region is genomic RNA-binding and ribosome-binding. Specifically inhibits interleukin-1 receptor-associated kinase 1/IRAK1-dependent signaling during viral entry, representing a means by which the alphaviruses may evade innate immune detection and activation prior to viral gene expression. Its function is as follows. Provides the signal sequence for p62 (E3/E2) translocation to the host endoplasmic reticulum. Mediates pH protection of E1 during secretory pathway trans- port. Plays a role in viral attachment to target host cell, by binding to the cell receptor. Synthesized as a p62 precursor which is processed by furin at the cell membrane just before virion budding, giving rise to E2-E1 heterodimer. The p62-E1 heterodimer is stable, whereas E2-E1 is unstable and dissociate at low pH. p62 is processed at the last step, presumably to avoid E1 fusion activation before its final export to cell surface. E2 C-terminus contains a transitory transmembrane that would be disrupted by palmitoylation, resulting in reorientation of the C-terminal tail from lumenal to cytoplasmic side. This step is critical since E2 C-terminus is involved in budding by interacting with capsid proteins. This release of E2 C-terminus in cytoplasm occurs lately in protein export, and precludes premature assembly of particles at the endoplasmic reticulum membrane. In terms of biological role, virion component that may play a role during viral assembly. The chain is Frameshifted structural polyprotein from Aedes (Middle-African hedgehog).